The primary structure comprises 375 residues: Growth/differentiation factor 8 (375 aa).

The N-terminal stretch at 1 to 23 (MQKLAVYVYIYLFMLISVDPVAL) is a signal peptide. The propeptide occupies 24-266 (DDGSQPTENA…VTDTPKRSRR (243 aa)). A glycan (N-linked (GlcNAc...) asparagine) is linked at Asn-71. 4 disulfide bridges follow: Cys-272/Cys-282, Cys-281/Cys-340, Cys-309/Cys-372, and Cys-313/Cys-374.

Belongs to the TGF-beta family. Homodimer; disulfide-linked.

The protein localises to the secreted. Functionally, acts specifically as a negative regulator of skeletal muscle growth. The protein is Growth/differentiation factor 8 (MSTN) of Anser anser anser (Western greylag goose).